The sequence spans 558 residues: MERVVKLAAKHCPFVSKADPSALRRMAGAGLIRAGARCPVVRHALPVAAATGADVSRGFKSDSKQMAMEPSLDEIHLKAGVVNTGSRTCRHADAVKAAAEAATTTPVTKKHQMPKHYASDLNGVGPATTPRFDYDTFYREELDKKHRDKSYRYFNNINRLAKEYPLAHLADPNTRVEVWCSNDYLNMGGHKKIREAMHQCIETYGGGAGGTRNIAGHNQHAVRLEKSLADLHQKPAALVFGSCYVANDATLSTLGRKLPNCIFLSDEMNHASMINGIRNSRCEKIIFKHNDLVDLEAKLASLPLNRPKIIAFESVYSMSGNVAPISEICDLAKKYGAITFLDEVHAVGMYGPRGAGVAEETPGLLSRVDIITGTLAKSYGCVGGYIAASSTLVDMIRSLAPGFIFTTSLPPHVMVGALTAVEHLKVSNVEREQQRSAVRRVKQSLSEIGIPVLSNDTHIVPAMVGDAHLAKLASDSLLHDHNIYVQSINFPTVSVGTERLRITPTPAHNTEHYVQSLTNAMNDVWSKFNINRIDGWEKRGIDVGRLCKFPVLPFTTTH.

The N-terminal 25 residues, 1–25 (MERVVKLAAKHCPFVSKADPSALRR), are a transit peptide targeting the mitochondrion. A disordered region spans residues 103 to 124 (TTTPVTKKHQMPKHYASDLNGV). R152, S265, and K284 together coordinate substrate. Pyridoxal 5'-phosphate contacts are provided by S317, H345, and T374. The active site involves K377. K377 bears the N6-(pyridoxal phosphate)lysine mark. Positions 406 and 407 each coordinate pyridoxal 5'-phosphate. T492 serves as a coordination point for substrate.

The protein belongs to the class-II pyridoxal-phosphate-dependent aminotransferase family. As to quaternary structure, homodimer. Pyridoxal 5'-phosphate serves as cofactor.

It is found in the mitochondrion matrix. It carries out the reaction succinyl-CoA + glycine + H(+) = 5-aminolevulinate + CO2 + CoA. The protein operates within porphyrin-containing compound metabolism; protoporphyrin-IX biosynthesis; 5-aminolevulinate from glycine: step 1/1. Catalyzes the synthesis of 5-aminolevulinate (ALA) from succinyl-CoA and glycine, the first and rate-limiting step in heme biosynthesis. The polypeptide is 5-aminolevulinate synthase, mitochondrial (Schizosaccharomyces pombe (strain 972 / ATCC 24843) (Fission yeast)).